The sequence spans 343 residues: 5-amino-6-(D-ribitylamino)uracil--L-tyrosine 4-hydroxyphenyl transferase (343 aa).

In terms of domain architecture, Radical SAM core spans 39-268 (VTYVVNRNIN…AIARILLYPE (230 aa)). [4Fe-4S] cluster contacts are provided by Cys-53, Cys-57, and Cys-60.

The protein belongs to the radical SAM superfamily. CofH family. As to quaternary structure, consists of two subunits, CofG and CofH. Requires [4Fe-4S] cluster as cofactor.

It catalyses the reaction 5-amino-6-(D-ribitylamino)uracil + L-tyrosine + S-adenosyl-L-methionine = 5-amino-5-(4-hydroxybenzyl)-6-(D-ribitylimino)-5,6-dihydrouracil + 2-iminoacetate + 5'-deoxyadenosine + L-methionine + H(+). It functions in the pathway cofactor biosynthesis; coenzyme F0 biosynthesis. Catalyzes the radical-mediated synthesis of 5-amino-5-(4-hydroxybenzyl)-6-(D-ribitylimino)-5,6-dihydrouracil from 5-amino-6-(D-ribitylamino)uracil and L-tyrosine. This chain is 5-amino-6-(D-ribitylamino)uracil--L-tyrosine 4-hydroxyphenyl transferase, found in Archaeoglobus fulgidus (strain ATCC 49558 / DSM 4304 / JCM 9628 / NBRC 100126 / VC-16).